Consider the following 447-residue polypeptide: Methyl-coenzyme M reductase II subunit beta (447 aa).

Coenzyme M is bound at residue Tyr-368. A coenzyme B-binding site is contributed by Gly-370.

The protein belongs to the methyl-coenzyme M reductase beta subunit family. MCR is a hexamer of two alpha, two beta, and two gamma chains, forming a dimer of heterotrimers. Requires coenzyme F430 as cofactor.

It carries out the reaction coenzyme B + methyl-coenzyme M = methane + coenzyme M-coenzyme B heterodisulfide. It participates in one-carbon metabolism; methyl-coenzyme M reduction; methane from methyl-coenzyme M: step 1/1. Its function is as follows. Component of the methyl-coenzyme M reductase (MCR) I that catalyzes the reductive cleavage of methyl-coenzyme M (CoM-S-CH3 or 2-(methylthio)ethanesulfonate) using coenzyme B (CoB or 7-mercaptoheptanoylthreonine phosphate) as reductant which results in the production of methane and the mixed heterodisulfide of CoB and CoM (CoM-S-S-CoB). This is the final step in methanogenesis. This is Methyl-coenzyme M reductase II subunit beta (mrtB) from Methanocaldococcus jannaschii (strain ATCC 43067 / DSM 2661 / JAL-1 / JCM 10045 / NBRC 100440) (Methanococcus jannaschii).